We begin with the raw amino-acid sequence, 333 residues long: DNA-directed RNA polymerase subunit alpha (333 aa).

Residues 1-233 (MVREKVRVST…DLFIPFLHAE (233 aa)) form an alpha N-terminal domain (alpha-NTD) region. The segment at 266–333 (KKEIAFKSIF…DILEIEKHFP (68 aa)) is alpha C-terminal domain (alpha-CTD).

Belongs to the RNA polymerase alpha chain family. As to quaternary structure, in plastids the minimal PEP RNA polymerase catalytic core is composed of four subunits: alpha, beta, beta', and beta''. When a (nuclear-encoded) sigma factor is associated with the core the holoenzyme is formed, which can initiate transcription.

The protein resides in the plastid. It is found in the chloroplast. The catalysed reaction is RNA(n) + a ribonucleoside 5'-triphosphate = RNA(n+1) + diphosphate. Functionally, DNA-dependent RNA polymerase catalyzes the transcription of DNA into RNA using the four ribonucleoside triphosphates as substrates. The chain is DNA-directed RNA polymerase subunit alpha from Lotus japonicus (Lotus corniculatus var. japonicus).